A 283-amino-acid chain; its full sequence is DegV domain-containing protein BH3627 (283 aa).

One can recognise a DegV domain in the interval 4 to 281 (IAIVTDSTAY…EGSIGLSWYI (278 aa)). Threonine 62 and serine 95 together coordinate hexadecanoate.

In terms of biological role, may bind long-chain fatty acids, such as palmitate, and may play a role in lipid transport or fatty acid metabolism. The chain is DegV domain-containing protein BH3627 from Halalkalibacterium halodurans (strain ATCC BAA-125 / DSM 18197 / FERM 7344 / JCM 9153 / C-125) (Bacillus halodurans).